We begin with the raw amino-acid sequence, 592 residues long: 2-succinyl-5-enolpyruvyl-6-hydroxy-3-cyclohexene-1-carboxylate synthase (592 aa).

Belongs to the TPP enzyme family. MenD subfamily. Homodimer. The cofactor is Mg(2+). Mn(2+) is required as a cofactor. Requires thiamine diphosphate as cofactor.

It carries out the reaction isochorismate + 2-oxoglutarate + H(+) = 5-enolpyruvoyl-6-hydroxy-2-succinyl-cyclohex-3-ene-1-carboxylate + CO2. It functions in the pathway quinol/quinone metabolism; 1,4-dihydroxy-2-naphthoate biosynthesis; 1,4-dihydroxy-2-naphthoate from chorismate: step 2/7. Its pathway is quinol/quinone metabolism; menaquinone biosynthesis. In terms of biological role, catalyzes the thiamine diphosphate-dependent decarboxylation of 2-oxoglutarate and the subsequent addition of the resulting succinic semialdehyde-thiamine pyrophosphate anion to isochorismate to yield 2-succinyl-5-enolpyruvyl-6-hydroxy-3-cyclohexene-1-carboxylate (SEPHCHC). The polypeptide is 2-succinyl-5-enolpyruvyl-6-hydroxy-3-cyclohexene-1-carboxylate synthase (Leifsonia xyli subsp. xyli (strain CTCB07)).